A 207-amino-acid chain; its full sequence is LexA repressor (207 aa).

A DNA-binding region (H-T-H motif) is located at residues 28–48; the sequence is RAEIARHLGFKSANAAEEHLK. Catalysis depends on for autocatalytic cleavage activity residues serine 124 and lysine 161.

This sequence belongs to the peptidase S24 family. Homodimer.

It catalyses the reaction Hydrolysis of Ala-|-Gly bond in repressor LexA.. In terms of biological role, represses a number of genes involved in the response to DNA damage (SOS response), including recA and lexA. In the presence of single-stranded DNA, RecA interacts with LexA causing an autocatalytic cleavage which disrupts the DNA-binding part of LexA, leading to derepression of the SOS regulon and eventually DNA repair. In Pseudoalteromonas atlantica (strain T6c / ATCC BAA-1087), this protein is LexA repressor.